The primary structure comprises 279 residues: Movement protein (279 aa).

Low complexity predominate over residues 256–266 (PPIAIGSPSAS). Residues 256-279 (PPIAIGSPSASRNNSFRSQVVNGL) form a disordered region. Residues 267–279 (RNNSFRSQVVNGL) are compositionally biased toward polar residues.

This sequence belongs to the cucumovirus movement protein family.

Its subcellular location is the host cell junction. It is found in the host plasmodesma. In terms of biological role, transports viral genome to neighboring plant cells directly through plasmosdesmata, without any budding. The movement protein allows efficient cell to cell propagation, by bypassing the host cell wall barrier. Acts by forming a tubular structure at the host plasmodesmata, enlarging it enough to allow free passage of virion capsids. The protein is Movement protein of Cucumis sativus (Cucumber).